The following is a 369-amino-acid chain: Aminomethyltransferase (369 aa).

This sequence belongs to the GcvT family. In terms of assembly, the glycine cleavage system is composed of four proteins: P, T, L and H.

It catalyses the reaction N(6)-[(R)-S(8)-aminomethyldihydrolipoyl]-L-lysyl-[protein] + (6S)-5,6,7,8-tetrahydrofolate = N(6)-[(R)-dihydrolipoyl]-L-lysyl-[protein] + (6R)-5,10-methylene-5,6,7,8-tetrahydrofolate + NH4(+). The glycine cleavage system catalyzes the degradation of glycine. In Xanthomonas oryzae pv. oryzae (strain MAFF 311018), this protein is Aminomethyltransferase.